A 230-amino-acid polypeptide reads, in one-letter code: Large ribosomal subunit protein uL1 (230 aa).

The protein belongs to the universal ribosomal protein uL1 family. As to quaternary structure, part of the 50S ribosomal subunit.

In terms of biological role, binds directly to 23S rRNA. The L1 stalk is quite mobile in the ribosome, and is involved in E site tRNA release. Protein L1 is also a translational repressor protein, it controls the translation of the L11 operon by binding to its mRNA. The chain is Large ribosomal subunit protein uL1 from Oenococcus oeni (strain ATCC BAA-331 / PSU-1).